The chain runs to 554 residues: MALTICTRFTDEYQLFEELGKGAFSVVRRCVKISSGQEYAAKIINTKKLSARDHQKLEREARICRLLKHPNIVRLHDSISEEGFHYLVFDLVTGGELFEDIVAREYYSEADASHCIQQILESVHHCHVNGIVHRDLKPENLLLASKMKGAAVKLADFGLAIEVQGDQQAWFGFAGTPGYLSPEVLRKDPYGKPVDMWACGVILYILLVGYPPFWDEDQHRLYQQIKAGAYDFPSPEWDTVTPEAKDLINKMLTINPSKRITAAEAPKHPWICQRSTVASMMHRQETVECLKKFNARRKLKGAILTTLLVTRNFSAAKSLLNKKPDGVKVNNKTNLASSPKDTGPAPALEPQTTVIHNPVDRNKESTESANTTIEDEDLKARRFGNLSINSIWQPSVGRPQNSEPKQAPNSSVQTCQVINKARKQEIIKVTEQLIESINNGDFEAYAKICDPGLTSFEPEALGNLVEGHDFHRFYFENALSKGNKPVHTILLNPHVHLIGEDAACIAYIRLTQYMDGSGMPRTMQSEETRVWHRRDGKWLNIHFHRSGAPSVPIN.

Positions 13–271 (YQLFEELGKG…AAEAPKHPWI (259 aa)) constitute a Protein kinase domain. ATP-binding positions include 19-27 (LGKGAFSVV) and Lys-42. The active-site Proton acceptor is the Asp-135. Residue Thr-286 is modified to Phosphothreonine. Phosphoserine is present on residues Ser-314 and Ser-318. Disordered regions lie at residues 324–375 (PDGV…TIED) and 392–413 (WQPS…SSVQ). Residues 330 to 340 (NNKTNLASSPK) show a composition bias toward polar residues. At Thr-372 the chain carries Phosphothreonine.

It belongs to the protein kinase superfamily. CAMK Ser/Thr protein kinase family. CaMK subfamily. In terms of assembly, CAMK2 is composed of four different chains: alpha, beta, gamma, and delta. The different isoforms assemble into homo- or heteromultimeric holoenzymes composed of 8 to 12 subunits. As to expression, first detected at 18 hpf. At 24 hpf, expressed in discrete anterior locations and along either side of the midline. At 48 hpf, expression is predominantly in the forebrain, and then accumulates in the forebrain, hindbrain, and retinal epithelium at 72 hpf.

It carries out the reaction L-seryl-[protein] + ATP = O-phospho-L-seryl-[protein] + ADP + H(+). The enzyme catalyses L-threonyl-[protein] + ATP = O-phospho-L-threonyl-[protein] + ADP + H(+). Autophosphorylation of CAMK2 plays an important role in the regulation of the kinase activity. CaM-kinase II (CAMK2) is a prominent kinase in the central nervous system. The polypeptide is Calcium/calmodulin-dependent protein kinase type II delta 2 chain (camk2d2) (Danio rerio (Zebrafish)).